The chain runs to 252 residues: Imidazole glycerol phosphate synthase subunit HisF (252 aa).

Catalysis depends on residues D11 and D130.

Belongs to the HisA/HisF family. As to quaternary structure, heterodimer of HisH and HisF.

The protein resides in the cytoplasm. It catalyses the reaction 5-[(5-phospho-1-deoxy-D-ribulos-1-ylimino)methylamino]-1-(5-phospho-beta-D-ribosyl)imidazole-4-carboxamide + L-glutamine = D-erythro-1-(imidazol-4-yl)glycerol 3-phosphate + 5-amino-1-(5-phospho-beta-D-ribosyl)imidazole-4-carboxamide + L-glutamate + H(+). It functions in the pathway amino-acid biosynthesis; L-histidine biosynthesis; L-histidine from 5-phospho-alpha-D-ribose 1-diphosphate: step 5/9. Its function is as follows. IGPS catalyzes the conversion of PRFAR and glutamine to IGP, AICAR and glutamate. The HisF subunit catalyzes the cyclization activity that produces IGP and AICAR from PRFAR using the ammonia provided by the HisH subunit. The polypeptide is Imidazole glycerol phosphate synthase subunit HisF (Azoarcus sp. (strain BH72)).